Reading from the N-terminus, the 130-residue chain is Keratin-associated protein 12-1 (130 aa).

14 consecutive repeat copies span residues 10–14, 15–29, 34–38, 40–44, 45–49, 60–64, 85–89, 90–94, 95–99, 104–108, 109–113, 114–118, 119–123, and 124–128. Positions 10–128 are 14 X 5 AA approximate repeats; that stretch reads CQPSCCVSSS…CKPVTCSNPS (119 aa).

The protein belongs to the KRTAP type 12 family. Interacts with hair keratins. Expressed only in the head and back skin of a 3 day old mouse. Not expressed in adult skin.

In terms of biological role, in the hair cortex, hair keratin intermediate filaments are embedded in an interfilamentous matrix, consisting of hair keratin-associated proteins (KRTAP), which are essential for the formation of a rigid and resistant hair shaft through their extensive disulfide bond cross-linking with abundant cysteine residues of hair keratins. The matrix proteins include the high-sulfur and high-glycine-tyrosine keratins. This Mus musculus (Mouse) protein is Keratin-associated protein 12-1.